A 506-amino-acid chain; its full sequence is Histidine ammonia-lyase (506 aa).

Residues 143–145 constitute a cross-link (5-imidazolinone (Ala-Gly)); sequence ASG. 2,3-didehydroalanine (Ser) is present on Ser144.

Belongs to the PAL/histidase family. Post-translationally, contains an active site 4-methylidene-imidazol-5-one (MIO), which is formed autocatalytically by cyclization and dehydration of residues Ala-Ser-Gly.

Its subcellular location is the cytoplasm. It carries out the reaction L-histidine = trans-urocanate + NH4(+). Its pathway is amino-acid degradation; L-histidine degradation into L-glutamate; N-formimidoyl-L-glutamate from L-histidine: step 1/3. In Citrobacter koseri (strain ATCC BAA-895 / CDC 4225-83 / SGSC4696), this protein is Histidine ammonia-lyase.